A 399-amino-acid chain; its full sequence is Pre-mycofactocin synthase (399 aa).

One can recognise an FMN hydroxy acid dehydrogenase domain in the interval 4–386 (ARDIWFETVA…VPEDILVPEG (383 aa)). 2 residues coordinate FMN: serine 111 and glutamine 131. Tyrosine 133 is a binding site for a 2-oxocarboxylate. Threonine 159 is an FMN binding site. Position 168 (arginine 168) interacts with a 2-oxocarboxylate. Lysine 257 contributes to the FMN binding site. Residue histidine 281 is the Proton acceptor of the active site. FMN-binding positions include 312–316 (DGGIR) and 335–336 (GR).

Belongs to the FMN-dependent alpha-hydroxy acid dehydrogenase family. FMN is required as a cofactor.

It carries out the reaction 3-amino-5-[(4-hydroxyphenyl)methyl]-4,4-dimethyl-2-pyrrolidin-2-one + O2 + H2O = pre-mycofactocin + H2O2 + NH4(+). Involved in the biosynthesis of the enzyme cofactor mycofactocin (MFT). Catalyzes the oxidative deamination of AHDP (3-amino-5-[(4-hydroxyphenyl)methyl]-4,4-dimethyl-2-pyrrolidin-2-one), forming an alpha-keto amide moiety on the resulting molecule, which is called pre-mycofactocin (PMFT). This reaction occurs via a 5-[(4-hydroxyphenyl)methyl]-3-imino-4,4-dimethylpyrrolidin-2-one intermediate, which converts to PMFT. The alpha-keto amide moiety is the redox-active center for the redox activity of mycofactocin. Is required for the in vivo ethanol assimilation in M.smegmatis. This is Pre-mycofactocin synthase from Mycolicibacterium smegmatis (strain ATCC 700084 / mc(2)155) (Mycobacterium smegmatis).